An 88-amino-acid chain; its full sequence is UPF0297 protein SPCG_0205 (88 aa).

The protein belongs to the UPF0297 family.

This is UPF0297 protein SPCG_0205 from Streptococcus pneumoniae (strain CGSP14).